We begin with the raw amino-acid sequence, 417 residues long: Serine hydroxymethyltransferase (417 aa).

Residues leucine 117 and 121–123 (GHL) each bind (6S)-5,6,7,8-tetrahydrofolate. Lysine 226 bears the N6-(pyridoxal phosphate)lysine mark.

It belongs to the SHMT family. As to quaternary structure, homodimer. Pyridoxal 5'-phosphate is required as a cofactor.

It is found in the cytoplasm. It carries out the reaction (6R)-5,10-methylene-5,6,7,8-tetrahydrofolate + glycine + H2O = (6S)-5,6,7,8-tetrahydrofolate + L-serine. It functions in the pathway one-carbon metabolism; tetrahydrofolate interconversion. The protein operates within amino-acid biosynthesis; glycine biosynthesis; glycine from L-serine: step 1/1. Catalyzes the reversible interconversion of serine and glycine with tetrahydrofolate (THF) serving as the one-carbon carrier. This reaction serves as the major source of one-carbon groups required for the biosynthesis of purines, thymidylate, methionine, and other important biomolecules. Also exhibits THF-independent aldolase activity toward beta-hydroxyamino acids, producing glycine and aldehydes, via a retro-aldol mechanism. In Shouchella clausii (strain KSM-K16) (Alkalihalobacillus clausii), this protein is Serine hydroxymethyltransferase.